A 117-amino-acid chain; its full sequence is Peptidyl-tRNA hydrolase (117 aa).

It belongs to the PTH2 family.

It is found in the cytoplasm. The catalysed reaction is an N-acyl-L-alpha-aminoacyl-tRNA + H2O = an N-acyl-L-amino acid + a tRNA + H(+). In terms of biological role, the natural substrate for this enzyme may be peptidyl-tRNAs which drop off the ribosome during protein synthesis. The chain is Peptidyl-tRNA hydrolase from Thermoplasma acidophilum (strain ATCC 25905 / DSM 1728 / JCM 9062 / NBRC 15155 / AMRC-C165).